A 225-amino-acid chain; its full sequence is Octanoyltransferase (225 aa).

A BPL/LPL catalytic domain is found at 31–214 (ENTCDEVWLV…ELTTLLDYTD (184 aa)). Substrate contacts are provided by residues 70 to 77 (RGGQVTYH), 137 to 139 (SLG), and 150 to 152 (GLA). The active-site Acyl-thioester intermediate is Cys-168.

The protein belongs to the LipB family.

It localises to the cytoplasm. It carries out the reaction octanoyl-[ACP] + L-lysyl-[protein] = N(6)-octanoyl-L-lysyl-[protein] + holo-[ACP] + H(+). It participates in protein modification; protein lipoylation via endogenous pathway; protein N(6)-(lipoyl)lysine from octanoyl-[acyl-carrier-protein]: step 1/2. Catalyzes the transfer of endogenously produced octanoic acid from octanoyl-acyl-carrier-protein onto the lipoyl domains of lipoate-dependent enzymes. Lipoyl-ACP can also act as a substrate although octanoyl-ACP is likely to be the physiological substrate. This is Octanoyltransferase from Aliivibrio fischeri (strain ATCC 700601 / ES114) (Vibrio fischeri).